The following is a 249-amino-acid chain: Large ribosomal subunit protein uL4 (249 aa).

It belongs to the universal ribosomal protein uL4 family. In terms of assembly, part of the 50S ribosomal subunit.

Functionally, one of the primary rRNA binding proteins, this protein initially binds near the 5'-end of the 23S rRNA. It is important during the early stages of 50S assembly. It makes multiple contacts with different domains of the 23S rRNA in the assembled 50S subunit and ribosome. Forms part of the polypeptide exit tunnel. The chain is Large ribosomal subunit protein uL4 from Methanospirillum hungatei JF-1 (strain ATCC 27890 / DSM 864 / NBRC 100397 / JF-1).